Consider the following 802-residue polypeptide: Copper-exporting P-type ATPase (802 aa).

2 consecutive HMA domains span residues 5 to 70 and 72 to 138; these read KKTT…YGVA and ETVE…YDAS. Positions 16, 19, 83, and 86 each coordinate Cu(+). The next 6 helical transmembrane spans lie at 161 to 181, 192 to 212, 224 to 244, 256 to 276, 411 to 431, and 438 to 458; these read LIIS…HLFN, WFQF…FYVG, MDVL…YEMV, LYFE…YLEA, YFVP…ITLV, and PALV…LGLA. Asp495 (4-aspartylphosphate intermediate) is an active-site residue. 2 residues coordinate Mg(2+): Asp690 and Asp694. 2 consecutive transmembrane segments (helical) span residues 748 to 767 and 771 to 790; these read LFWA…LGLL and VAGA…ALRL.

This sequence belongs to the cation transport ATPase (P-type) (TC 3.A.3) family. Type IB subfamily.

It is found in the cell membrane. It catalyses the reaction Cu(+)(in) + ATP + H2O = Cu(+)(out) + ADP + phosphate + H(+). In terms of biological role, involved in copper export. The protein is Copper-exporting P-type ATPase (copA) of Staphylococcus aureus (strain MW2).